A 525-amino-acid chain; its full sequence is Acyl-lipid (9-3)-desaturase (525 aa).

The Cytochrome b5 heme-binding domain occupies 102-176; that stretch reads KSTHPLSEVA…LQDFYIGDVE (75 aa). The heme site is built by H137 and H159. A helical membrane pass occupies residues 216–236; that stretch reads VAIFAASIAIICWSKTISAVL. Positions 254-258 match the Histidine box-1 motif; the sequence is HDFLH. A helical transmembrane segment spans residues 266–286; that stretch reads WLNEVVGYVIGNAVLGFSTGW. Residues 291 to 295 carry the Histidine box-2 motif; sequence HNLHH. A run of 3 helical transmembrane segments spans residues 340–360, 378–398, and 401–421; these read QHLFFMGLLFFARGSWLFWSW, GTVLFHYFWFVGTACYLLPGW, and LVWMAVTELMSGMLLGFVFVL. Residues 462 to 466 carry the Histidine box-3 motif; that stretch reads QIEHH.

The protein belongs to the fatty acid desaturase type 1 family.

It localises to the membrane. The enzyme catalyses (9Z,12Z,15Z)-octadecatrienoyl-containing glycerolipid + 2 Fe(II)-[cytochrome b5] + O2 + 2 H(+) = (6Z,9Z,12Z,15Z)-octadecatetraenoyl-containing glycerolipid + 2 Fe(III)-[cytochrome b5] + 2 H2O. The catalysed reaction is a (9Z,12Z)-octadecadienoyl-containing glycerolipid + 2 Fe(II)-[cytochrome b5] + O2 + 2 H(+) = (6Z,9Z,12Z)-octadecatrienoyl-containing glycerolipid + 2 Fe(III)-[cytochrome b5] + 2 H2O. It participates in lipid metabolism; polyunsaturated fatty acid biosynthesis. In terms of biological role, fatty acid desaturase able to introduce a delta(6)-double bond into delta(9)-unsaturated fatty-acid substrates. Can use both linoleic acid (18:2(9Z,12Z)) and alpha-linolenic acid (18:3(9Z,12Z,15Z)) as substrates. Required for the biosynthesis of arachidonic acid (20:4(5z,8Z,11Z,14Z)). The chain is Acyl-lipid (9-3)-desaturase from Physcomitrium patens (Spreading-leaved earth moss).